Consider the following 306-residue polypeptide: MAVARLAAVAAWVPCRSWGWAAVPFGPHRGLSVLLARIPQRAPRWLPACRQKTSLSFLNRPDLPNLAYKKLKGKSPGIIFIPGYLSYMNGTKALAIEEFCKSLGHACIRFDYSGVGSSDGNSEESTLGKWRKDVLSIIDDLADGPQILVGSSLGGWLMLHAAIARPEKVVALIGVATAADTLVTKFNQLPVELKKEVEMKGVWSMPSKYSEEGVYNVQYSFIKEAEHHCLLHSPIPVNCPIRLLHGMKDDIVPWHTSMQVADRVLSTDVDVILRKHSDHRMREKADIQLLVYTIDDLIDKLSTIVN.

A mitochondrion-targeting transit peptide spans 1–52 (MAVARLAAVAAWVPCRSWGWAAVPFGPHRGLSVLLARIPQRAPRWLPACRQK). One can recognise an AB hydrolase-1 domain in the interval 78-178 (IIFIPGYLSY…VVALIGVATA (101 aa)). Residues S152, D249, and H279 each act as charge relay system in the active site.

Belongs to the AB hydrolase superfamily.

The protein resides in the mitochondrion. It catalyses the reaction S-hexadecanoyl-L-cysteinyl-[protein] + H2O = L-cysteinyl-[protein] + hexadecanoate + H(+). The catalysed reaction is mycophenolic acid O-acyl-beta-D-glucuronide + H2O = mycophenolate + D-glucuronate + H(+). Inhibited by palmostatin-B. In terms of biological role, acts as an acyl-protein thioesterase that hydrolyzes fatty acids from acylated residues in proteins. Regulates the mitochondrial S-depalmitoylation of the nucleophilic active site residue of peroxiredoxin-5/PRDX5, a key antioxidant protein, therefore modulating mitochondrial antioxidant ability. Also catalyzes the deglucuronidation of mycophenolic acid acyl-glucuronide, an active metabolite of the immunosuppressant drug mycophenolate. The chain is Palmitoyl-protein thioesterase ABHD10, mitochondrial from Homo sapiens (Human).